An 80-amino-acid chain; its full sequence is Defensin-like protein 291 (80 aa).

An N-terminal signal peptide occupies residues 1-29 (MAASKTTIFIVFVLCLSCTLLVNISGIQA). 3 disulfides stabilise this stretch: Cys-50-Cys-70, Cys-56-Cys-75, and Cys-62-Cys-77.

This sequence belongs to the DEFL family.

Its subcellular location is the secreted. In Arabidopsis thaliana (Mouse-ear cress), this protein is Defensin-like protein 291.